A 257-amino-acid chain; its full sequence is ECF RNA polymerase sigma factor SigE (257 aa).

The tract at residues 87 to 153 (LVRQHADRVY…FLDMVRRRAR (67 aa)) is sigma-70 factor domain-2. Positions 111–114 (DLTQ) match the Polymerase core binding motif. The tract at residues 186-236 (LQAALASLPPEFRAAVVLCDIEGLSYEEIGATLGVKLGTVRSRIHRGRQAL) is sigma-70 factor domain-4. Residues 211–230 (YEEIGATLGVKLGTVRSRIH) constitute a DNA-binding region (H-T-H motif).

Belongs to the sigma-70 factor family. ECF subfamily. Interacts transiently with the RNA polymerase catalytic core formed by RpoA, RpoB, RpoC and RpoZ (2 alpha, 1 beta, 1 beta' and 1 omega subunit) to form the RNA polymerase holoenzyme that can initiate transcription. Interacts (via sigma-70 factor domain 4) with cognate anti-sigma-E factor RseA under reducing conditions, which stops the sigma factor from functioning.

Functionally, sigma factors are initiation factors that promote the attachment of RNA polymerase to specific initiation sites and are then released. Extracytoplasmic function (ECF) sigma factors are held in an inactive form by an anti-sigma factor until released. Responds to surface stress (H(2)O(2)). The sequence is that of ECF RNA polymerase sigma factor SigE (sigE) from Mycobacterium tuberculosis (strain ATCC 35801 / TMC 107 / Erdman).